A 623-amino-acid chain; its full sequence is UvrABC system protein C (623 aa).

The GIY-YIG domain maps to 28-105 (GAPGVYRMLD…IKQLKPKYNV (78 aa)). A UVR domain is found at 215–250 (TRVQEELAEQMMAASEAMEFERAAALRDRIRALTTV).

Belongs to the UvrC family. As to quaternary structure, interacts with UvrB in an incision complex.

Its subcellular location is the cytoplasm. In terms of biological role, the UvrABC repair system catalyzes the recognition and processing of DNA lesions. UvrC both incises the 5' and 3' sides of the lesion. The N-terminal half is responsible for the 3' incision and the C-terminal half is responsible for the 5' incision. The protein is UvrABC system protein C of Ruegeria pomeroyi (strain ATCC 700808 / DSM 15171 / DSS-3) (Silicibacter pomeroyi).